The following is a 518-amino-acid chain: Probable glycosyltransferase At5g03795 (518 aa).

Over 1–25 (MGDEDVDGKCKNMSACSSTTSYSTK) the chain is Cytoplasmic. A helical; Signal-anchor for type II membrane protein transmembrane segment spans residues 26-46 (LFLFMVPLVVISGFVFVNIGP). Residues 47–518 (KDSTSLLTSL…RRLNVKIREV (472 aa)) lie on the Lumenal side of the membrane. N-linked (GlcNAc...) asparagine glycosylation is found at Asn-104, Asn-113, Asn-120, Asn-282, and Asn-320.

The protein belongs to the glycosyltransferase 47 family.

It is found in the golgi apparatus membrane. Its function is as follows. May be involved in cell wall biosynthesis. This is Probable glycosyltransferase At5g03795 from Arabidopsis thaliana (Mouse-ear cress).